Here is a 70-residue protein sequence, read N- to C-terminus: Peptide Hp1035 (70 aa).

The first 23 residues, 1–23 (MKTQFVILLVALVLFQMFAQSEA), serve as a signal peptide directing secretion. Position 36 is a phenylalanine amide (phenylalanine 36). Positions 40-70 (GLQDLDMDDLDQLFDGEISQADINFLNQLMR) are excised as a propeptide.

Belongs to the non-disulfide-bridged peptide (NDBP) superfamily. Short antimicrobial peptide (group 4) family. Expressed by the venom gland.

The protein resides in the secreted. The protein localises to the target cell membrane. Its function is as follows. Amphipathic peptide with antimicrobial activity. This chain is Peptide Hp1035, found in Heterometrus petersii (Asian forest scorpion).